Consider the following 190-residue polypeptide: Ohanin (190 aa).

A signal peptide spans 1-20 (MLLFTLCFFADQENGGKALA). Residues 21–127 (SPPGNWQKAD…RIWQKGLWWL (107 aa)) form the B30.2/SPRY domain. The propeptide occupies 128 to 190 (RRLETDSDKL…IGARVSLANL (63 aa)).

Expressed by the venom gland.

The protein localises to the secreted. In terms of biological role, neurotoxin that produces dose-dependent hypolocomotion and hyperalgesia in mice. May directly act on the central nervous system, as it is 6500-fold more potent when administered intracerebroventricularly than intraperitoneal. In Ophiophagus hannah (King cobra), this protein is Ohanin.